Here is a 580-residue protein sequence, read N- to C-terminus: Negative elongation factor B (580 aa).

Lys519 carries the post-translational modification N6-acetyllysine. The interval 552-580 (DHRKPSPTQAAETPALDLPLPSVPAPATL) is disordered. Ser557 bears the Phosphoserine mark.

Belongs to the NELF-B family. The NELF complex is composed of NELFA, NELFB, NELFCD and NELFE; the N-terminus of NELFB binds to the NELFA:NELFCD subcomplex. Binds RNA which may help to stabilize the NELF complex on nucleic acid Interacts with the first BRCT repeat of BRCA1. Interacts with KIAA1191. Isoform 1 and isoform 2 interact with NELFA, NELFCD and NELFE. Isoform 1 is expressed in the kidney, liver, adipose and lung. Isoform 2 is widely expressed.

The protein localises to the nucleus. Essential component of the NELF complex, a complex that negatively regulates the elongation of transcription by RNA polymerase II (Pol II). The NELF complex, which acts via an association with the DSIF complex and causes transcriptional pausing, is counteracted by the P-TEFb kinase complex. May be able to induce chromatin unfolding. Essential for early embryogenesis; plays an important role in maintaining the undifferentiated state of embryonic stem cells (ESCs) by preventing unscheduled expression of developmental genes. Plays a key role in establishing the responsiveness of stem cells to developmental cues; facilitates plasticity and cell fate commitment in ESCs by establishing the appropriate expression level of signaling molecules. Supports the transcription of genes involved in energy metabolism in cardiomyocytes; facilitates the association of transcription initiation factors with the promoters of the metabolism-related genes. The sequence is that of Negative elongation factor B (Nelfb) from Mus musculus (Mouse).